The sequence spans 673 residues: MNVSFSTPVQNSTASRLALIQQAAARSGALPPAGQYRGSKLSPFDVSQMSGVSISMVERAKINGPEFVEELEWLRQQTTSRCFLDAEMWTNEILAHLPDKWCAPNTLNLYNQVSELVLDNTRSPMASPASNSLYAPGEDQMPTVKRNHTSRFAQSLIKNKEFRRAAFFLEKTMNGNKLDHFLHFRCLFLAYYQEHLENDAEGIERKTSFAEERSPFSLLYQRMEDKKLRENEDVWFEYLMGLLEVELGLKDLAEKSFRNVVIREPRIWPAWEALSRLIADIEDADKFVTSAEVKSLWMGDWFMTLVLQRFHQHSMAIQKAEQLVTRGMTGLPMIITKIAACSNARHDHDQAISNFEDVRKADPYRLGDLHLLSDSLYIRNDQKKLSTLAIEVYKVHKFRWETCCIVANYHAIRRDSEHAIKFFQRALRLNPGLAALWVLIGHEFMEMKNNAAACVSYRRAIEIDPADHRGWYGLGQMYDIMKMPAYALFYYQEAQKCKPHDSRLLVALGDIYSKLNRIEDAEKCFTGAYLFGDVEGNALWSLAKLHERYSDDNKAAQAFEVFLVVYELVTSAEEKIIYAIAFLANHFFKIEDFDKASEYATKCLAFETLCQEGNRLFREIAKIQARESRLPVEEAPGPSNASAAGGQEAMDTEEAPQEGGEEEMSEGEDDFSF.

TPR repeat units follow at residues 86–120, 159–195, 232–267, 332–365, 400–433, 434–467, 469–501, 502–535, 539–572, and 577–610; these read AEMW…VLDN, NKEF…YQEH, EDVW…EPRI, PMII…DPYR, WETC…NPGL, AALW…DPAD, RGWY…KPHD, SRLL…GDVE, LWSL…VTSA, and IYAI…ETLC. The tract at residues 628–673 is disordered; it reads SRLPVEEAPGPSNASAAGGQEAMDTEEAPQEGGEEEMSEGEDDFSF. The span at 635–646 shows a compositional bias: low complexity; it reads APGPSNASAAGG. A compositionally biased stretch (acidic residues) spans 650 to 673; sequence MDTEEAPQEGGEEEMSEGEDDFSF.

It belongs to the APC8/CDC23 family. The APC/C complex is probably composed of at least 12 subunits: apc-2, apc-10, apc-11, cdc-26, emb-1, emb-27, emb-30, mat-1, mat-2, mat-3, such-1 and gfi-3.

It participates in protein modification; protein ubiquitination. Probable component of the anaphase promoting complex/cyclosome (APC/C), a cell cycle-regulated E3 ubiquitin ligase that controls progression through mitosis and the G1 phase of the cell cycle. The APC/C complex acts by mediating ubiquitination and subsequent degradation of target proteins. Developmental role in early embryogenesis and the metaphase to anaphase transition in oocyte and spermatocyte meiosis and mitosis in germ cells. Required for embryonic anterior-posterior axis formation. Plays a role in regulating the abundance of glr-1 receptors in postmitotic neurons, which may in turn control animal locomotion. Involved in regulating GABA neurotransmitter release at neuromuscular junctions in GABA motor neurons. In Caenorhabditis elegans, this protein is Cell division cycle protein 23 homolog.